A 252-amino-acid polypeptide reads, in one-letter code: Sulfoacetaldehyde reductase 2 (252 aa).

An NADP(+)-binding site is contributed by 6-30 (LITGATSGFGRAAARRFADAGWSLI). Serine 139 is a binding site for substrate. Tyrosine 152 serves as the catalytic Proton acceptor.

The protein belongs to the short-chain dehydrogenases/reductases (SDR) family. As to quaternary structure, homodimer and heterotetramer.

The enzyme catalyses 2-hydroxyethane-1-sulfonate + NADP(+) = sulfoacetaldehyde + NADPH + H(+). It functions in the pathway organosulfur degradation. Catalyzes the formation of isethionate from 2-sulfoacetaldehyde in the deaminative pathway of taurine. Constitutively expressed enzyme that only mediates a small part of the activity observed in taurine-grown cells. In Chromohalobacter salexigens (strain ATCC BAA-138 / DSM 3043 / CIP 106854 / NCIMB 13768 / 1H11), this protein is Sulfoacetaldehyde reductase 2 (isfD2).